The chain runs to 284 residues: Bifunctional protein FolD (284 aa).

NADP(+) is bound by residues Gly165–Gly167, Thr192, and Val233.

Belongs to the tetrahydrofolate dehydrogenase/cyclohydrolase family. Homodimer.

The enzyme catalyses (6R)-5,10-methylene-5,6,7,8-tetrahydrofolate + NADP(+) = (6R)-5,10-methenyltetrahydrofolate + NADPH. It carries out the reaction (6R)-5,10-methenyltetrahydrofolate + H2O = (6R)-10-formyltetrahydrofolate + H(+). It functions in the pathway one-carbon metabolism; tetrahydrofolate interconversion. Functionally, catalyzes the oxidation of 5,10-methylenetetrahydrofolate to 5,10-methenyltetrahydrofolate and then the hydrolysis of 5,10-methenyltetrahydrofolate to 10-formyltetrahydrofolate. This chain is Bifunctional protein FolD, found in Corynebacterium glutamicum (strain R).